A 301-amino-acid polypeptide reads, in one-letter code: UDP-N-acetylenolpyruvoylglucosamine reductase 1 (301 aa).

Residues 29-196 (KIGGPADILI…LEAEFQLQIG (168 aa)) form the FAD-binding PCMH-type domain. Residue arginine 174 is part of the active site. Catalysis depends on serine 225, which acts as the Proton donor. The active site involves glutamate 295.

Belongs to the MurB family. Requires FAD as cofactor.

The protein localises to the cytoplasm. The enzyme catalyses UDP-N-acetyl-alpha-D-muramate + NADP(+) = UDP-N-acetyl-3-O-(1-carboxyvinyl)-alpha-D-glucosamine + NADPH + H(+). The protein operates within cell wall biogenesis; peptidoglycan biosynthesis. In terms of biological role, cell wall formation. The protein is UDP-N-acetylenolpyruvoylglucosamine reductase 1 of Bacillus cereus (strain ZK / E33L).